The sequence spans 486 residues: Glutamyl-tRNA(Gln) amidotransferase subunit A (486 aa).

Residues K76 and S151 each act as charge relay system in the active site. S175 serves as the catalytic Acyl-ester intermediate.

It belongs to the amidase family. GatA subfamily. In terms of assembly, heterotrimer of A, B and C subunits.

The enzyme catalyses L-glutamyl-tRNA(Gln) + L-glutamine + ATP + H2O = L-glutaminyl-tRNA(Gln) + L-glutamate + ADP + phosphate + H(+). In terms of biological role, allows the formation of correctly charged Gln-tRNA(Gln) through the transamidation of misacylated Glu-tRNA(Gln) in organisms which lack glutaminyl-tRNA synthetase. The reaction takes place in the presence of glutamine and ATP through an activated gamma-phospho-Glu-tRNA(Gln). The sequence is that of Glutamyl-tRNA(Gln) amidotransferase subunit A from Nitrosomonas eutropha (strain DSM 101675 / C91 / Nm57).